The following is an 86-amino-acid chain: Neuropeptide-like 2 (86 aa).

The signal sequence occupies residues 1 to 19 (MAKLAICILVFALFALALS). 2 propeptides span residues 20–34 (ARVPREESNPAQEFL) and 45–86 (IEKL…AAST).

As to expression, hemolymph (at protein level).

Its subcellular location is the secreted. In Drosophila melanogaster (Fruit fly), this protein is Neuropeptide-like 2 (Nplp2).